Here is a 147-residue protein sequence, read N- to C-terminus: 3-hydroxyacyl-[acyl-carrier-protein] dehydratase FabZ (147 aa).

Residue His-50 is part of the active site.

Belongs to the thioester dehydratase family. FabZ subfamily.

It localises to the cytoplasm. It carries out the reaction a (3R)-hydroxyacyl-[ACP] = a (2E)-enoyl-[ACP] + H2O. In terms of biological role, involved in unsaturated fatty acids biosynthesis. Catalyzes the dehydration of short chain beta-hydroxyacyl-ACPs and long chain saturated and unsaturated beta-hydroxyacyl-ACPs. The chain is 3-hydroxyacyl-[acyl-carrier-protein] dehydratase FabZ from Lactiplantibacillus plantarum (strain ATCC BAA-793 / NCIMB 8826 / WCFS1) (Lactobacillus plantarum).